The sequence spans 138 residues: Putative nickel-responsive regulator (138 aa).

Ni(2+) is bound by residues histidine 78, histidine 89, histidine 91, and cysteine 97.

Belongs to the transcriptional regulatory CopG/NikR family. The cofactor is Ni(2+).

Its function is as follows. Transcriptional regulator. The chain is Putative nickel-responsive regulator from Thermococcus kodakarensis (strain ATCC BAA-918 / JCM 12380 / KOD1) (Pyrococcus kodakaraensis (strain KOD1)).